We begin with the raw amino-acid sequence, 288 residues long: Bifunctional protein FolD (288 aa).

NADP(+) contacts are provided by residues 164 to 166 (GRS), S193, and I234.

This sequence belongs to the tetrahydrofolate dehydrogenase/cyclohydrolase family. In terms of assembly, homodimer.

The catalysed reaction is (6R)-5,10-methylene-5,6,7,8-tetrahydrofolate + NADP(+) = (6R)-5,10-methenyltetrahydrofolate + NADPH. The enzyme catalyses (6R)-5,10-methenyltetrahydrofolate + H2O = (6R)-10-formyltetrahydrofolate + H(+). Its pathway is one-carbon metabolism; tetrahydrofolate interconversion. In terms of biological role, catalyzes the oxidation of 5,10-methylenetetrahydrofolate to 5,10-methenyltetrahydrofolate and then the hydrolysis of 5,10-methenyltetrahydrofolate to 10-formyltetrahydrofolate. The sequence is that of Bifunctional protein FolD from Nitratidesulfovibrio vulgaris (strain DSM 19637 / Miyazaki F) (Desulfovibrio vulgaris).